The sequence spans 144 residues: Transcriptional regulator MraZ (144 aa).

2 SpoVT-AbrB domains span residues 5-47 and 76-121; these read EYQY…PLDR and AHKT…SQER.

This sequence belongs to the MraZ family. In terms of assembly, forms oligomers.

Its subcellular location is the cytoplasm. The protein localises to the nucleoid. In Thermus thermophilus (strain ATCC BAA-163 / DSM 7039 / HB27), this protein is Transcriptional regulator MraZ.